The following is a 217-amino-acid chain: Proteasome subunit beta type-6-B like protein (217 aa).

The propeptide at 1–16 (MERHFMDSQIKGVSTG) is removed in mature form. Threonine 17 serves as the catalytic Nucleophile.

Belongs to the peptidase T1B family. In terms of assembly, the 26S proteasome consists of a 20S proteasome core and two 19S regulatory subunits. The 20S proteasome core is composed of 28 subunits that are arranged in four stacked rings, resulting in a barrel-shaped structure. The two end rings are each formed by seven alpha subunits, and the two central rings are each formed by seven beta subunits. The catalytic chamber with the active sites is on the inside of the barrel.

Its subcellular location is the cytoplasm. The protein resides in the nucleus. It catalyses the reaction Cleavage of peptide bonds with very broad specificity.. In terms of biological role, the proteasome is a multicatalytic proteinase complex which is characterized by its ability to cleave peptides with Arg, Phe, Tyr, Leu, and Glu adjacent to the leaving group at neutral or slightly basic pH. The proteasome has an ATP-dependent proteolytic activity. This subunit is involved in antigen processing to generate class I binding peptides. The chain is Proteasome subunit beta type-6-B like protein (psmb6l-b) from Salmo salar (Atlantic salmon).